Reading from the N-terminus, the 879-residue chain is Phosphoenolpyruvate carboxylase (879 aa).

Active-site residues include histidine 141 and lysine 546.

Belongs to the PEPCase type 1 family. Mg(2+) is required as a cofactor.

The enzyme catalyses oxaloacetate + phosphate = phosphoenolpyruvate + hydrogencarbonate. In terms of biological role, forms oxaloacetate, a four-carbon dicarboxylic acid source for the tricarboxylic acid cycle. This Stutzerimonas stutzeri (strain A1501) (Pseudomonas stutzeri) protein is Phosphoenolpyruvate carboxylase.